A 282-amino-acid chain; its full sequence is Phosphoglycerate mutase-like protein 1 (282 aa).

Residue His23 is the Tele-phosphohistidine intermediate of the active site. Glu135 acts as the Proton donor/acceptor in catalysis.

The protein belongs to the phosphoglycerate mutase family.

May play a role in carbohydrates metabolism. The protein is Phosphoglycerate mutase-like protein 1 of Arabidopsis thaliana (Mouse-ear cress).